Reading from the N-terminus, the 852-residue chain is Zinc finger protein 484 (852 aa).

The KRAB domain maps to 8–78; the sequence is VSFKDVTVDF…DGEIPSQSRP (71 aa). A Glycyl lysine isopeptide (Lys-Gly) (interchain with G-Cter in SUMO2) cross-link involves residue lysine 156. The C2H2-type 1; degenerate zinc-finger motif lies at 223–245; the sequence is CECNQCGKPLHHKQALIQQQKIH. A C2H2-type 2; degenerate zinc finger spans residues 279–301; sequence HECHECEAVFTQKSQLDGSQRVY. Residues 328-350 form a C2H2-type 3; degenerate zinc finger; that stretch reads YKCSDYGRAFIQKSDLFRCQRIH. A C2H2-type 4; degenerate zinc finger spans residues 356–378; the sequence is YEYSECEKNLPQNSNLNIHKKIH. 15 consecutive C2H2-type zinc fingers follow at residues 384–406, 412–434, 440–462, 468–490, 496–518, 524–546, 552–574, 580–602, 608–630, 636–658, 664–686, 692–714, 720–742, 748–770, and 776–798; these read FECTECGKAFTRKSTLSMHQKIH, YVCTECGKAFIRKSHFITHERIH, YECSDCGKSFIKKSQLHVHQRIH, FICSECGKVFTHKTNLIIHQKIH, YICTVCGKAFTDRSNLIKHQKIH, YKCSDCGKSFTWKSRLRIHQKCH, YECSECGKAFIQKSTLSMHQRIH, YVCTECGKAFFHKSHFITHERIH, YECSICGKSFTKKSQLHVHQQIH, YRCAECGKAFTDRSNLFTHQKIH, YKCSDCGKAFTRKSGLHIHQQSH, YECSECGKAFARKSTLIMHQRIH, YICNECGKSFIQKSHLNRHRRIH, YECSDCGKSFIKKSQLHEHHRIH, and YICAECGKAFTIRSNLIKHQKIH. Residue lysine 816 forms a Glycyl lysine isopeptide (Lys-Gly) (interchain with G-Cter in SUMO2) linkage.

This sequence belongs to the krueppel C2H2-type zinc-finger protein family.

Its subcellular location is the nucleus. Functionally, may be involved in transcriptional regulation. The protein is Zinc finger protein 484 (ZNF484) of Homo sapiens (Human).